Here is a 104-residue protein sequence, read N- to C-terminus: Pterin-4-alpha-carbinolamine dehydratase (104 aa).

An N-acetylalanine modification is found at Ala-2. Substrate contacts are provided by residues 61–63 (DHH) and 78–81 (STHE).

Belongs to the pterin-4-alpha-carbinolamine dehydratase family. As to quaternary structure, homotetramer and homodimer. Heterotetramer with HNF1A; formed by a dimer of dimers. Interacts with HNF1B (via HNF-p1 domain); the interaction increases HNF1B transactivation activity. Mainly expressed in the liver, in pancreatic cells, and in the kidney, especially in the distal convoluted tubule, in the cortical thick ascending limb of Henle's loop and in the connecting tubule.

The protein localises to the cytoplasm. It is found in the nucleus. It carries out the reaction (4aS,6R)-4a-hydroxy-L-erythro-5,6,7,8-tetrahydrobiopterin = (6R)-L-erythro-6,7-dihydrobiopterin + H2O. Functionally, involved in tetrahydrobiopterin biosynthesis. Seems to both prevent the formation of 7-pterins and accelerate the formation of quinonoid-BH2. Coactivator for HNF1A-dependent transcription. Regulates the dimerization of homeodomain protein HNF1A and enhances its transcriptional activity. Also acts as a coactivator for HNF1B-dependent transcription. The chain is Pterin-4-alpha-carbinolamine dehydratase (Pcbd1) from Mus musculus (Mouse).